Here is a 208-residue protein sequence, read N- to C-terminus: ATP-dependent Clp protease proteolytic subunit (208 aa).

The active-site Nucleophile is S105. The active site involves H130.

This sequence belongs to the peptidase S14 family. Fourteen ClpP subunits assemble into 2 heptameric rings which stack back to back to give a disk-like structure with a central cavity, resembling the structure of eukaryotic proteasomes.

The protein localises to the cytoplasm. The enzyme catalyses Hydrolysis of proteins to small peptides in the presence of ATP and magnesium. alpha-casein is the usual test substrate. In the absence of ATP, only oligopeptides shorter than five residues are hydrolyzed (such as succinyl-Leu-Tyr-|-NHMec, and Leu-Tyr-Leu-|-Tyr-Trp, in which cleavage of the -Tyr-|-Leu- and -Tyr-|-Trp bonds also occurs).. In terms of biological role, cleaves peptides in various proteins in a process that requires ATP hydrolysis. Has a chymotrypsin-like activity. Plays a major role in the degradation of misfolded proteins. The sequence is that of ATP-dependent Clp protease proteolytic subunit from Xanthomonas campestris pv. campestris (strain 8004).